The chain runs to 77 residues: Putative Fis-like DNA-binding protein (77 aa).

Residues 53–72 (QSLAADYLGINRNTLRKKLQ) constitute a DNA-binding region (H-T-H motif).

Belongs to the transcriptional regulatory Fis family.

This chain is Putative Fis-like DNA-binding protein, found in Ralstonia nicotianae (strain ATCC BAA-1114 / GMI1000) (Ralstonia solanacearum).